The chain runs to 416 residues: Homogentisate 1,2-dioxygenase (416 aa).

H275 (proton acceptor) is an active-site residue. Residues H318 and E324 each coordinate Fe cation. 2 residues coordinate homogentisate: Y333 and H354. Fe cation is bound at residue H354.

The protein belongs to the homogentisate dioxygenase family. In terms of assembly, hexamer; dimer of trimers. Requires Fe cation as cofactor.

The catalysed reaction is homogentisate + O2 = 4-maleylacetoacetate + H(+). Its pathway is amino-acid degradation; L-phenylalanine degradation; acetoacetate and fumarate from L-phenylalanine: step 4/6. In terms of biological role, involved in the catabolism of homogentisate (2,5-dihydroxyphenylacetate or 2,5-OH-PhAc), a central intermediate in the degradation of phenylalanine and tyrosine. Catalyzes the oxidative ring cleavage of the aromatic ring of homogentisate to yield maleylacetoacetate. The polypeptide is Homogentisate 1,2-dioxygenase (Legionella pneumophila (strain Lens)).